Consider the following 182-residue polypeptide: Signal peptidase I (182 aa).

Residues 1 to 13 lie on the Cytoplasmic side of the membrane; that stretch reads MTKQKEKRGRRWP. Residues 14–30 traverse the membrane as a helical segment; it reads WFVAVCVVATLRLFVFS. At 31-182 the chain is on the extracellular side; that stretch reads NYVVEGKSMM…WPFKQFAFQF (152 aa). Residues Ser38 and Lys79 contribute to the active site.

The protein belongs to the peptidase S26 family.

It is found in the cell membrane. The enzyme catalyses Cleavage of hydrophobic, N-terminal signal or leader sequences from secreted and periplasmic proteins.. The polypeptide is Signal peptidase I (lepB) (Bacillus caldolyticus).